The primary structure comprises 309 residues: Protein FdhE homolog (309 aa).

This sequence belongs to the FdhE family.

It localises to the cytoplasm. Necessary for formate dehydrogenase activity. In Serratia proteamaculans (strain 568), this protein is Protein FdhE homolog.